A 213-amino-acid chain; its full sequence is Succinate dehydrogenase subunit 3-1, mitochondrial (213 aa).

The transit peptide at 1–105 directs the protein to the mitochondrion; that stretch reads MAATALFRSI…LDVGTSKRLF (105 aa). Histidine 130 serves as a coordination point for heme. Residues 148–165 traverse the membrane as a helical segment; the sequence is ISGVYLTGVTFAGYLLYL.

In terms of assembly, component of complex II composed of eight subunits in plants: four classical SDH subunits SDH1, SDH2, SDH3 and SDH4 (a flavoprotein (FP), an iron-sulfur protein (IP), and a cytochrome b composed of a large and a small subunit.), as well as four subunits unknown in mitochondria from bacteria and heterotrophic eukaryotes. Requires heme as cofactor. As to expression, expressed in flowers, inflorescences and stems.

It localises to the mitochondrion inner membrane. It functions in the pathway carbohydrate metabolism; tricarboxylic acid cycle. Its function is as follows. Membrane-anchoring subunit of succinate dehydrogenase (SDH). In Arabidopsis thaliana (Mouse-ear cress), this protein is Succinate dehydrogenase subunit 3-1, mitochondrial.